Here is a 110-residue protein sequence, read N- to C-terminus: Ferredoxin (110 aa).

4Fe-4S ferredoxin-type domains lie at 2–30 (TYIV…YEGE) and 31–60 (FMLV…PESP). The [3Fe-4S] cluster site is built by cysteine 9 and cysteine 17. [4Fe-4S] cluster contacts are provided by cysteine 21, cysteine 40, cysteine 43, and cysteine 46. A [3Fe-4S] cluster-binding site is contributed by cysteine 50.

Requires [4Fe-4S] cluster as cofactor. [3Fe-4S] cluster serves as cofactor.

In terms of biological role, ferredoxins are iron-sulfur proteins that transfer electrons in a wide variety of metabolic reactions. In Rickettsia typhi (strain ATCC VR-144 / Wilmington), this protein is Ferredoxin (fdxA).